Reading from the N-terminus, the 180-residue chain is ATP synthase subunit delta (180 aa).

It belongs to the ATPase delta chain family. As to quaternary structure, F-type ATPases have 2 components, F(1) - the catalytic core - and F(0) - the membrane proton channel. F(1) has five subunits: alpha(3), beta(3), gamma(1), delta(1), epsilon(1). F(0) has three main subunits: a(1), b(2) and c(10-14). The alpha and beta chains form an alternating ring which encloses part of the gamma chain. F(1) is attached to F(0) by a central stalk formed by the gamma and epsilon chains, while a peripheral stalk is formed by the delta and b chains.

It is found in the cell membrane. Functionally, f(1)F(0) ATP synthase produces ATP from ADP in the presence of a proton or sodium gradient. F-type ATPases consist of two structural domains, F(1) containing the extramembraneous catalytic core and F(0) containing the membrane proton channel, linked together by a central stalk and a peripheral stalk. During catalysis, ATP synthesis in the catalytic domain of F(1) is coupled via a rotary mechanism of the central stalk subunits to proton translocation. Its function is as follows. This protein is part of the stalk that links CF(0) to CF(1). It either transmits conformational changes from CF(0) to CF(1) or is implicated in proton conduction. This is ATP synthase subunit delta from Enterococcus faecalis (strain ATCC 700802 / V583).